We begin with the raw amino-acid sequence, 698 residues long: Protein let-99 (698 aa).

Residues 23–107 enclose the DEP domain; sequence FRSNLSLKTN…SESRIYLFMK (85 aa). 2 disordered regions span residues 115–188 and 653–672; these read PKPR…DDEI and ITRSRNDWQPPVPDKPQASP. Positions 146 to 157 are enriched in basic residues; sequence RPPKARLPRRLS. Positions 178-188 are enriched in basic and acidic residues; it reads HGFDDHKDDEI.

The protein localises to the cytoplasm. Its subcellular location is the cell cortex. In terms of biological role, required for the proper orientation of spindles after the establishment of polarity. May play a role in interactions between the astral microtubules and the cortical cytoskeleton. Required for asymmetric forces on nuclei and spindles. Acts downstream of the PAR signaling as an intermediate that transduces polarity information to the machinery that positions the mitotic spindle, possibly by regulating force generation. Regulates gpr-1/2 asymmetric cortical localization during the first embryonic cell divisions. Acts antagonistically to the gpr-1/2 signaling pathway. Regulates mes-1 expression and/or localization pattern during early embryogenesis. This chain is Protein let-99 (let-99), found in Caenorhabditis elegans.